The sequence spans 822 residues: Sodium/hydrogen exchanger 1 (822 aa).

The Extracellular segment spans residues 1–102 (MMLRWSGIWG…FPVLDIDYLH (102 aa)). The interval 41-73 (SPTANTIRGAEPPRERSIGDVTTAPSEPVHHPD) is disordered. The helical transmembrane segment at 103–125 (VRTPFEISLWILLACLMKIGFHV) threads the bilayer. Over 126–134 (IPTISSIVP) the chain is Cytoplasmic. Residues 135–152 (ESCLLIVVGLLVGGLIKG) traverse the membrane as a helical segment. The Extracellular portion of the chain corresponds to 153–162 (VGETPPFLQS). Residues 163 to 180 (DVFFLFLLPPIILDAGYF) form a helical membrane-spanning segment. Residues 181 to 190 (LPLRQFTENL) lie on the Cytoplasmic side of the membrane. A helical membrane pass occupies residues 191-219 (GTILIFAVVGTLWNAFFLGGLLYAVCLVG). At 220–226 (GEQINNI) the chain is on the extracellular side. The chain crosses the membrane as a helical span at residues 227 to 253 (GLLDTLLFGSIISAVDPVAVVAVFEEI). Residues 254 to 256 (HIN) lie on the Cytoplasmic side of the membrane. The helical transmembrane segment at 257–287 (ELLHILVFGESLLNDAVTVVLYHLFEEFANY) threads the bilayer. The Extracellular portion of the chain corresponds to 288–291 (DSIG). The chain crosses the membrane as a helical span at residues 292–326 (ISDIFLGFLSFFVVALGGVFVGVVYGVIAAFTSRF). The Cytoplasmic segment spans residues 327-332 (TSHIRV). A helical transmembrane segment spans residues 333 to 345 (IEPLFVFLYSYMA). The Extracellular segment spans residues 346 to 354 (YLSAELFHL). The helical transmembrane segment at 355-375 (SGIMALIASGVVMRPYVEANI) threads the bilayer. Over 376–377 (SH) the chain is Cytoplasmic. Residues 378–408 (KSHTTIKYFLKMWSSVSETLIFIFLGVSTVA) traverse the membrane as a helical segment. Over 409-414 (GSHQWN) the chain is Extracellular. The helical transmembrane segment at 415–442 (WTFVISTLLFCLIARVLGVLVLTWFINK) threads the bilayer. The Cytoplasmic segment spans residues 443–448 (FRIVKL). The chain crosses the membrane as a helical span at residues 449-473 (TPKDQFIIAYGGLRGAIAFSLGYLM). Residues 474-479 (DKKHFP) lie on the Extracellular side of the membrane. The chain crosses the membrane as a helical span at residues 480–509 (MCDLFLTAIITVIFFTVFVQGMTIRPLVDL). Positions 507 to 549 (VDLLAVKKKQETKRSINEEIHTQFLDHLLTGIEDICGHYGHHH) are interaction with TESC. Over 510–822 (LAVKKKQETK…EGEPFIPKGE (313 aa)) the chain is Cytoplasmic. The PI(4,5)P2-binding region stretch occupies residues 513 to 520 (KKKQETKR). The interaction with CHP2 stretch occupies residues 519–549 (KRSINEEIHTQFLDHLLTGIEDICGHYGHHH). The segment at 544 to 549 (HYGHHH) is confers pH-dependent PI(4,5)P2 binding. Positions 556 to 564 (RFNKKYVKK) are PI(4,5)P2-binding region. A phosphoserine mark is found at serine 603 and serine 606. Residue threonine 607 is modified to Phosphothreonine. Phosphoserine occurs at positions 609 and 652. The tract at residues 637–822 (KILRSNLQKT…EGEPFIPKGE (186 aa)) is interaction with TESC. Residues 637 to 822 (KILRSNLQKT…EGEPFIPKGE (186 aa)) are interaction with CALM1. Positions 688–691 (LTVP) are interaction with PPP3CA. A phosphoserine mark is found at serine 697, serine 701, and serine 707. Residues 719 to 724 (PVITID) form an interaction with PPP3CA region. Residues serine 727, serine 730, and serine 733 each carry the phosphoserine modification. The disordered stretch occupies residues 752–822 (PTRLTRGEED…EGEPFIPKGE (71 aa)). Residue threonine 756 is modified to Phosphothreonine. Residues 759–768 (EEDEDEDEDG) show a composition bias toward acidic residues. Threonine 786 carries the phosphothreonine modification. Residues serine 792, serine 794, and serine 803 each carry the phosphoserine modification.

The protein belongs to the monovalent cation:proton antiporter 1 (CPA1) transporter (TC 2.A.36) family. Homodimer; dimerization is crucial for its function. Oligomer. Interacts with CALM in a calcium-dependent manner. Interacts with TESC. Interacts (via the juxtamembrane region of the cytoplasmic C-terminal domain) with CHP1; the interaction occurs at the plasma membrane in a calcium-dependent manner. Interacts with CHP2; the interaction occurs in a calcium-dependent manner. Interacts with EZR; regulates the cytoskeletal interactions of SLC9A1 and promotes stress fiber formation. In terms of processing, ubiquitinated, leading to its degradation by the proteasome. Ubiquitination is reduced by CHP1. Post-translationally, O-glycosylated. Palmitoylated; may play a major role in SLC9A1 regulation. In terms of processing, phosphorylation at Thr-786 increases SLC9A1 activity. Specifically dephosphorylated at Thr-786 by PPP3CA that negatively regulates SLC9A1 activity. Phosphorylation at Ser-652 by AKT1 reduces SLC9A1 binding to CALM1.

Its subcellular location is the cell membrane. It localises to the basolateral cell membrane. The catalysed reaction is Na(+)(in) + H(+)(out) = Na(+)(out) + H(+)(in). It catalyses the reaction Li(+)(out) + H(+)(in) = Li(+)(in) + H(+)(out). The enzyme catalyses Li(+)(in) + Na(+)(out) = Li(+)(out) + Na(+)(in). Activated at acidic pHs. Inhibited by amiloride and 5-amino-substituted derivatives. Inhibited by cariporide and eniporide. Phosphatidylinositol 4,5-bisphosphate (PI(4,5)P2) and phosphatidylinositol 3,4,5-trisphosphate (PI(3,4,5)P3) bind and differentially regulate SLC9A1 activity. Functionally, electroneutral Na(+) /H(+) antiporter that extrudes Na(+) in exchange for external protons driven by the inward sodium ion chemical gradient, protecting cells from acidification that occurs from metabolism. Exchanges intracellular H(+) ions for extracellular Na(+) in 1:1 stoichiometry. Plays a key role in maintening intracellular pH neutral and cell volume, and thus is important for cell growth, proliferation, migration and survival. In addition, can transport lithium Li(+) and also functions as a Na(+)/Li(+) antiporter. SLC9A1 also functions in membrane anchoring and organization of scaffolding complexes that coordinate signaling inputs. The protein is Sodium/hydrogen exchanger 1 (SLC9A1) of Cricetulus griseus (Chinese hamster).